We begin with the raw amino-acid sequence, 59 residues long: U-reduvitoxin-Pr6a (59 aa).

The signal sequence occupies residues 1 to 19 (MKVFLLTILLCFLIAYCAG). Intrachain disulfides connect Cys-31/Cys-46, Cys-38/Cys-51, and Cys-45/Cys-58.

Belongs to the venom Ptu1-like knottin family. As to expression, expressed by the venom gland.

The protein resides in the secreted. Functionally, binds reversibly and blocks P/Q-type voltage-gated calcium channels (Cav). This chain is U-reduvitoxin-Pr6a, found in Platymeris rhadamanthus (Red spot assassin bug).